The primary structure comprises 149 residues: Transcriptional regulator MraZ (149 aa).

SpoVT-AbrB domains follow at residues 7–54 and 83–126; these read KYVN…GISH and AVQL…QPQN.

This sequence belongs to the MraZ family. Forms oligomers.

It localises to the cytoplasm. It is found in the nucleoid. The protein is Transcriptional regulator MraZ of Rickettsia peacockii (strain Rustic).